The following is a 106-amino-acid chain: MPRNTSHEHDHGLMVEASKPEVAPPPRYQVLLLNDDYTPMDFVVTVLEQFFNLNLEQATQIMLHVHTRGRGVCGVYSREVAESKVAQVNEFSRMNQHPLLCTMEQA.

Over residues 1 to 13 the composition is skewed to basic and acidic residues; it reads MPRNTSHEHDHGL. Residues 1 to 20 are disordered; the sequence is MPRNTSHEHDHGLMVEASKP.

This sequence belongs to the ClpS family. In terms of assembly, binds to the N-terminal domain of the chaperone ClpA.

In terms of biological role, involved in the modulation of the specificity of the ClpAP-mediated ATP-dependent protein degradation. The sequence is that of ATP-dependent Clp protease adapter protein ClpS from Xanthomonas axonopodis pv. citri (strain 306).